The sequence spans 284 residues: MRFVIITGLSGAGKTQALKAMEDMGFFCIDNFPPALLPKLADLFYHSKNVDKVALGMDLRGGQFFEDIYSSLEFLKKNNYDYEIVFLEASDEVLIKRFKETRRKHPLSEEGRIVDGINEERKRLAEIRKIANSIIDTSNLTSSQLKEELSNIFLKGKKFKGIIIDIMSFGYKYGIPLDADLVFDVRFLPNPFYIEELRPLTGNDDKVKEYVMKWEEAKEFLKKLGDMIKFLIPYYIREGKSQLVIAIGCTGGKHRSVTIANALYEFLKKEDYSVILHHRDIGEE.

ATP is bound at residue 8 to 15 (GLSGAGKT). 58–61 (DLRG) serves as a coordination point for GTP.

This sequence belongs to the RapZ-like family.

In terms of biological role, displays ATPase and GTPase activities. This is Nucleotide-binding protein Teth39_0666 from Thermoanaerobacter pseudethanolicus (strain ATCC 33223 / 39E) (Clostridium thermohydrosulfuricum).